The sequence spans 324 residues: IDS-like terpene synthase 3 (324 aa).

Residues Asp77 and Asp81 each coordinate Mg(2+).

Belongs to the FPP/GGPP synthase family. The cofactor is Mg(2+).

The catalysed reaction is (2E)-geranyl diphosphate + H2O = linalool + diphosphate. It carries out the reaction (2E,6E)-farnesyl diphosphate + H2O = (6E)-nerolidol + diphosphate. Terpene synthase that shows monoterpene synthase activity and produces linalool, using geranyl diphosphate (GPP) as substrate. Also shows sesquiterpene synthase activity as it is able to convert farnesyl diphosphate (FPP) into (E)-nerolidol. The chain is IDS-like terpene synthase 3 from Melampsora lini (Rust fungus).